The sequence spans 176 residues: Isopentenyl-diphosphate Delta-isomerase 1 (176 aa).

2 residues coordinate Mn(2+): His-23 and His-30. A Nudix hydrolase domain is found at 28 to 162; that stretch reads HLHRAFSCFI…EEFCTPWFKK (135 aa). Residue Cys-65 is part of the active site. Cys-65 provides a ligand contact to Mg(2+). His-67 is a binding site for Mn(2+). Residue Glu-85 participates in Mg(2+) binding. Mn(2+) contacts are provided by Glu-112 and Glu-114. Glu-114 is a catalytic residue.

This sequence belongs to the IPP isomerase type 1 family. In terms of assembly, homodimer. Requires Mg(2+) as cofactor. The cofactor is Mn(2+).

It localises to the cytoplasm. It catalyses the reaction isopentenyl diphosphate = dimethylallyl diphosphate. Its pathway is isoprenoid biosynthesis; dimethylallyl diphosphate biosynthesis; dimethylallyl diphosphate from isopentenyl diphosphate: step 1/1. Functionally, catalyzes the 1,3-allylic rearrangement of the homoallylic substrate isopentenyl (IPP) to its highly electrophilic allylic isomer, dimethylallyl diphosphate (DMAPP). The protein is Isopentenyl-diphosphate Delta-isomerase 1 of Photorhabdus laumondii subsp. laumondii (strain DSM 15139 / CIP 105565 / TT01) (Photorhabdus luminescens subsp. laumondii).